The primary structure comprises 466 residues: Soluble pyridine nucleotide transhydrogenase (466 aa).

FAD is bound at residue glutamate 36 to cysteine 45.

The protein belongs to the class-I pyridine nucleotide-disulfide oxidoreductase family. FAD is required as a cofactor.

The protein resides in the cytoplasm. It catalyses the reaction NAD(+) + NADPH = NADH + NADP(+). Conversion of NADPH, generated by peripheral catabolic pathways, to NADH, which can enter the respiratory chain for energy generation. This is Soluble pyridine nucleotide transhydrogenase from Escherichia coli O6:K15:H31 (strain 536 / UPEC).